The primary structure comprises 251 residues: Triosephosphate isomerase (251 aa).

9–11 (NWK) provides a ligand contact to substrate. His-95 serves as the catalytic Electrophile. Residue Glu-167 is the Proton acceptor of the active site. Residues Gly-173, Ser-213, and 234 to 235 (GG) each bind substrate.

The protein belongs to the triosephosphate isomerase family. As to quaternary structure, homodimer.

It is found in the cytoplasm. It carries out the reaction D-glyceraldehyde 3-phosphate = dihydroxyacetone phosphate. Its pathway is carbohydrate biosynthesis; gluconeogenesis. It functions in the pathway carbohydrate degradation; glycolysis; D-glyceraldehyde 3-phosphate from glycerone phosphate: step 1/1. Functionally, involved in the gluconeogenesis. Catalyzes stereospecifically the conversion of dihydroxyacetone phosphate (DHAP) to D-glyceraldehyde-3-phosphate (G3P). This is Triosephosphate isomerase from Pediococcus pentosaceus (strain ATCC 25745 / CCUG 21536 / LMG 10740 / 183-1w).